We begin with the raw amino-acid sequence, 277 residues long: Glutamate racemase (277 aa).

Substrate contacts are provided by residues 25–26 and 57–58; these read DS and YG. Cysteine 89 serves as the catalytic Proton donor/acceptor. 90-91 is a substrate binding site; the sequence is NT. Cysteine 204 (proton donor/acceptor) is an active-site residue. Residue 205 to 206 participates in substrate binding; sequence TH.

It belongs to the aspartate/glutamate racemases family.

It carries out the reaction L-glutamate = D-glutamate. Its pathway is cell wall biogenesis; peptidoglycan biosynthesis. Its function is as follows. Provides the (R)-glutamate required for cell wall biosynthesis. The sequence is that of Glutamate racemase from Brucella abortus (strain 2308).